The chain runs to 459 residues: WD repeat-containing protein 41 (459 aa).

WD repeat units lie at residues 40–79, 82–128, 131–168, 220–258, 321–359, and 403–441; these read KAHH…KLLE, GHTQ…QVQR, CFQS…LCKT, DHQD…MQAY, AHDS…QLAA, and GHSS…SGLR.

In terms of assembly, component of the C9orf72-SMCR8 complex, at least composed of C9orf72, SMCR8 and WDR41. The complex is formed of two protomers, each individually consisting of one molecule each of C9orf72, SMCR8 and WDR41. The protomers homodimerize via an interaction between C9orf72 (via C-terminus) and SMCR8 (via N-terminus). Within each protomer SMCR8 (via DENN domain) acts as a bridging protein between WDR41 (via C-terminus and N-terminus) and C9orf72 (via C-terminus). The C9orf72-SMCR8 complex associates with the ULK1/ATG1 kinase complex.

The protein localises to the cytoplasm. In terms of biological role, non-catalytic component of the C9orf72-SMCR8 complex, a complex that has guanine nucleotide exchange factor (GEF) activity and regulates autophagy. The C9orf72-SMCR8 complex promotes the exchange of GDP to GTP, converting inactive GDP-bound RAB8A and RAB39B into their active GTP-bound form, thereby promoting autophagosome maturation. As part of the C9orf72-SMCR8 complex, stimulates RAB8A and RAB11A GTPase activity in vitro, however WDR42 is shown not be an essential complex component for this function. The C9orf72-SMCR8 complex also acts as a negative regulator of autophagy initiation by interacting with the ULK1/ATG1 kinase complex and inhibiting its protein kinase activity. This chain is WD repeat-containing protein 41, found in Homo sapiens (Human).